Consider the following 138-residue polypeptide: Ribosome-binding factor A (138 aa).

The protein belongs to the RbfA family. In terms of assembly, monomer. Binds 30S ribosomal subunits, but not 50S ribosomal subunits or 70S ribosomes.

The protein localises to the cytoplasm. Functionally, one of several proteins that assist in the late maturation steps of the functional core of the 30S ribosomal subunit. Associates with free 30S ribosomal subunits (but not with 30S subunits that are part of 70S ribosomes or polysomes). Required for efficient processing of 16S rRNA. May interact with the 5'-terminal helix region of 16S rRNA. This chain is Ribosome-binding factor A, found in Chromobacterium violaceum (strain ATCC 12472 / DSM 30191 / JCM 1249 / CCUG 213 / NBRC 12614 / NCIMB 9131 / NCTC 9757 / MK).